The primary structure comprises 202 residues: MSHYFYLTPQILLPFSPLTSQEFDLIRRKAGASWQDETRWSDSSVTTYTGSYRKKQLDKSMCSQFSFRAGQHEPECKQMSLTNSSACHLLCWAGTQETTDIKGLFPDITRPFKKSFDVKHGVAHQIWDFGDCFPTPPNYGKYCVRPKKPAQEALINYSRRGKGVLKHLHGRCDSESKVCSSEDSEADRYSDYGWGGPSSPFN.

Residues 178 to 202 (VCSSEDSEADRYSDYGWGGPSSPFN) are disordered.

This is an uncharacterized protein from Homo sapiens (Human).